The primary structure comprises 423 residues: Tubulin beta-2 chain (423 aa).

GTP is bound by residues Glu-44, Ser-113, Gly-117, Thr-118, Gly-119, Asn-179, and Asn-201. Glu-44 lines the Mg(2+) pocket. The interval 394–423 (VSEYQQYQDATAEEEGEYDEDEDDEGGDYA) is disordered. A compositionally biased stretch (acidic residues) spans 404–423 (TAEEEGEYDEDEDDEGGDYA).

Belongs to the tubulin family. In terms of assembly, dimer of alpha and beta chains. A typical microtubule is a hollow water-filled tube with an outer diameter of 25 nm and an inner diameter of 15 nM. Alpha-beta heterodimers associate head-to-tail to form protofilaments running lengthwise along the microtubule wall with the beta-tubulin subunit facing the microtubule plus end conferring a structural polarity. Microtubules usually have 13 protofilaments but different protofilament numbers can be found in some organisms and specialized cells. Mg(2+) serves as cofactor.

Its subcellular location is the cytoplasm. It is found in the cytoskeleton. Its function is as follows. Tubulin is the major constituent of microtubules, a cylinder consisting of laterally associated linear protofilaments composed of alpha- and beta-tubulin heterodimers. Microtubules grow by the addition of GTP-tubulin dimers to the microtubule end, where a stabilizing cap forms. Below the cap, tubulin dimers are in GDP-bound state, owing to GTPase activity of alpha-tubulin. The chain is Tubulin beta-2 chain (TUBB2) from Oomycete-like sp. (strain MacKay2000).